Here is a 531-residue protein sequence, read N- to C-terminus: UDP-glucuronosyltransferase 1A3 (531 aa).

The first 25 residues, 1–25 (MGIQGFLQKLSGLLLLLCALPWAEG), serve as a signal peptide directing secretion. N-linked (GlcNAc...) asparagine glycans are attached at residues Asn116, Asn139, Asn293, and Asn431. A helical membrane pass occupies residues 489–505 (VIGFLLAIVLTVVFIVY).

This sequence belongs to the UDP-glycosyltransferase family. As to quaternary structure, homodimers. Homooligomer. Interacts with UGT1A1, UGT1A4, UGT1A6, UGT1A7, UGT1A8, UGT1A9 and UGT1A10 to form heterodimers.

The protein resides in the endoplasmic reticulum membrane. It carries out the reaction glucuronate acceptor + UDP-alpha-D-glucuronate = acceptor beta-D-glucuronoside + UDP + H(+). The enzyme catalyses 17beta-estradiol + UDP-alpha-D-glucuronate = 17beta-estradiol 3-O-(beta-D-glucuronate) + UDP + H(+). It catalyses the reaction 17beta-estradiol + UDP-alpha-D-glucuronate = 17beta-estradiol 17-O-(beta-D-glucuronate) + UDP + H(+). The catalysed reaction is 17alpha-estradiol + UDP-alpha-D-glucuronate = 17alpha-estradiol 3-O-(beta-D-glucuronate) + UDP + H(+). It carries out the reaction estrone + UDP-alpha-D-glucuronate = estrone 3-O-(beta-D-glucuronate) + UDP + H(+). The enzyme catalyses chenodeoxycholate + UDP-alpha-D-glucuronate = chenodeoxycholoyl-24-O-(beta-D-glucuronate) + UDP. It catalyses the reaction deoxycholate + UDP-alpha-D-glucuronate = deoxycholoyl-24-O-(beta-D-glucuronate) + UDP. The catalysed reaction is lithocholate + UDP-alpha-D-glucuronate = lithocholoyl-24-O-(beta-D-glucuronate) + UDP. It carries out the reaction hyodeoxycholate + UDP-alpha-D-glucuronate = hyodeoxycholoyl-24-O-(beta-D-glucuronate) + UDP. The enzyme catalyses hyocholate + UDP-alpha-D-glucuronate = hyocholoyl-24-O-(beta-D-glucuronate) + UDP. It catalyses the reaction calcidiol + UDP-alpha-D-glucuronate = calcidiol 25-O-(beta-D-glucuronide) + UDP + H(+). The catalysed reaction is losartan + UDP-alpha-D-glucuronate = losartan-2-N-beta-D-glucuronide + UDP. It carries out the reaction candesartan + UDP-alpha-D-glucuronate = candesartan-2-N-beta-D-glucuronide + UDP. The enzyme catalyses zolasartan + UDP-alpha-D-glucuronate = zolarsartan-2-N-beta-D-glucuronide + UDP. It catalyses the reaction (E)-ferulate + UDP-alpha-D-glucuronate = (E)-4-O-(beta-D-glucuronosyl)-ferulate + UDP + H(+). The catalysed reaction is (E)-ferulate + UDP-alpha-D-glucuronate = (E)-ferulic acid beta-D-glucuronate ester + UDP. In terms of biological role, UDP-glucuronosyltransferase (UGT) that catalyzes phase II biotransformation reactions in which lipophilic substrates are conjugated with glucuronic acid to increase the metabolite's water solubility, thereby facilitating excretion into either the urine or bile. Essential for the elimination and detoxification of drugs, xenobiotics and endogenous compounds. Catalyzes the glucuronidation of endogenous estrogen hormones such as estradiol and estrone. Contributes to bile acid (BA) detoxification by catalyzing the glucuronidation of BA substrates, which are natural detergents for dietary lipids absorption. Involved in the glucuronidation of calcidiol, which is the major circulating form of vitamin D3, essential for the regulation of calcium and phosphate homeostasis. Involved in the glucuronidation of the phytochemical ferulic acid at the phenolic or the carboxylic acid group. Involved in the glucuronidation of the AGTR1 angiotensin receptor antagonists losartan, candesartan and zolarsartan, which can inhibit the effect of angiotensin II. This is UDP-glucuronosyltransferase 1A3 from Rattus norvegicus (Rat).